A 353-amino-acid chain; its full sequence is Methylthioribose-1-phosphate isomerase (353 aa).

Residues 51-53 (RGA), arginine 94, and glutamine 199 contribute to the substrate site. Catalysis depends on aspartate 240, which acts as the Proton donor. Position 250-251 (250-251 (NK)) interacts with substrate.

The protein belongs to the eIF-2B alpha/beta/delta subunits family. MtnA subfamily. In terms of assembly, homodimer.

It catalyses the reaction 5-(methylsulfanyl)-alpha-D-ribose 1-phosphate = 5-(methylsulfanyl)-D-ribulose 1-phosphate. It participates in amino-acid biosynthesis; L-methionine biosynthesis via salvage pathway; L-methionine from S-methyl-5-thio-alpha-D-ribose 1-phosphate: step 1/6. Functionally, catalyzes the interconversion of methylthioribose-1-phosphate (MTR-1-P) into methylthioribulose-1-phosphate (MTRu-1-P). This Bacillus pumilus (strain SAFR-032) protein is Methylthioribose-1-phosphate isomerase.